Consider the following 544-residue polypeptide: Matrilin-1 (544 aa).

A signal peptide spans 1 to 26; sequence MRALSGPRLMLCGLLLLLFQAPCALG. The region spanning 42 to 217 is the VWFA 1 domain; that stretch reads DLVFVVDSSR…SVIEKLSKKF (176 aa). Asn-77 is a glycosylation site (N-linked (GlcNAc...) asparagine). Positions 224–264 constitute an EGF-like domain; sequence VSDLCATGDHDCEQVCVSSPGSYTCACREGFTLNSDGKTCN. 3 disulfide bridges follow: Cys-228–Cys-239, Cys-235–Cys-248, and Cys-250–Cys-263. One can recognise a VWFA 2 domain in the interval 276–448; it reads DLVFLIDGSK…KTINQIGKKL (173 aa). Asn-345 carries an N-linked (GlcNAc...) asparagine glycan.

Homotrimer. Part of a complex composed of MATN1 (via VWFA1 domain), type 2 collagens and type 6 collagens. Forms a complex (via covalent bonds) with ACAN; the interaction increases in abundance with increasing age of the organism via an increase in occupancy of MATN1 binding sites. Interacts with COMP. In terms of processing, N-glycosylated; reduces binding affinity for type 2 collagens. Expressed in trachea from fetus into adulthood (at protein level).

The protein resides in the secreted. It localises to the extracellular space. Its subcellular location is the extracellular matrix. Functionally, a major component of the extracellular matrix of non-articular cartilage. Binds to type 2 collagens and forms long concatenated protein networks as part of the extracellular matrix. Required for the network-like organization and bundling of collagen fibrils surrounding chondrocytes in the zones of maturation and hypertrophy. Required for mechanotransduction and adaption to mechanical loading in cartilage chondrocytes, resulting in an increase in expression of the extracellular matrix components ACAN and COL2A1. Acts as a moderator of angiogenesis in response to injury. The protein is Matrilin-1 of Bos taurus (Bovine).